The sequence spans 185 residues: Threonylcarbamoyl-AMP synthase (185 aa).

One can recognise a YrdC-like domain in the interval 4-185 (SFRVQQAARE…LATGEVVRPG (182 aa)).

Belongs to the SUA5 family. TsaC subfamily.

The protein localises to the cytoplasm. The enzyme catalyses L-threonine + hydrogencarbonate + ATP = L-threonylcarbamoyladenylate + diphosphate + H2O. In terms of biological role, required for the formation of a threonylcarbamoyl group on adenosine at position 37 (t(6)A37) in tRNAs that read codons beginning with adenine. Catalyzes the conversion of L-threonine, HCO(3)(-)/CO(2) and ATP to give threonylcarbamoyl-AMP (TC-AMP) as the acyladenylate intermediate, with the release of diphosphate. This Pseudomonas putida (strain ATCC 700007 / DSM 6899 / JCM 31910 / BCRC 17059 / LMG 24140 / F1) protein is Threonylcarbamoyl-AMP synthase.